A 301-amino-acid polypeptide reads, in one-letter code: Protein ARMCX6 (301 aa).

The mitochondrion outer membrane (MOM)-targeting sequence stretch occupies residues 1–6 (MGRARE). Residues 1 to 7 (MGRAREM) are Mitochondrial intermembrane-facing. Residues 8-25 (GWMAAGLMIGAGACYCMY) form a helical; Signal-anchor membrane-spanning segment. Residues 26-36 (KLTMGRDEGNE) are mitochondrion outer membrane (MOM)-targeting sequence. Residues 26–301 (KLTMGRDEGN…REMLVEAISP (276 aa)) are Cytoplasmic-facing. Positions 70 to 105 (SEDGEWDEPGAPGGTEDRRSGGGKANRAHPTKQRPF) are disordered.

It belongs to the eutherian X-chromosome-specific Armcx family.

Its subcellular location is the mitochondrion. It is found in the mitochondrion outer membrane. Functionally, may regulate the dynamics and distribution of mitochondria in neural cells. This Rattus norvegicus (Rat) protein is Protein ARMCX6 (Armcx6).